The following is a 197-amino-acid chain: MENKNHQQENFKSTYQSLVNSARILFVEKGYQAVSIDEISGKALVTKGAFYHHFKNKKQLLSACYKQQLIMIDAYITTKTDLTNGWSALESIFEHYLDYIIDNNKNLIPIQEVMPIIGWNELEKISLEYITGKVNAIVSKLIQENQLKAYDSDVLKNLLNGWFMHIAIHAKNLKELADKKGQFIAIYRGFLLSLKDK.

An HTH tetR-type domain is found at 12–72 (KSTYQSLVNS…ACYKQQLIMI (61 aa)). A DNA-binding region (H-T-H motif) is located at residues 35–54 (SIDEISGKALVTKGAFYHHF).

The sequence is that of Transposon Tn10 TetC protein (tetC) from Escherichia coli.